Reading from the N-terminus, the 165-residue chain is ATP synthase subunit delta, mitochondrial (165 aa).

Residues 1-27 constitute a mitochondrion transit peptide; that stretch reads MNSLRIARAALRVRPTAVRAPLQRRGY.

Belongs to the ATPase epsilon chain family. F-type ATPases have 2 components, CF(1) - the catalytic core - and CF(0) - the membrane proton channel. CF(1) has five subunits: alpha(3), beta(3), gamma(1), delta(1), epsilon(1). CF(0) has three main subunits: a, b and c.

Its subcellular location is the mitochondrion. The protein localises to the mitochondrion inner membrane. Its function is as follows. Mitochondrial membrane ATP synthase (F(1)F(0) ATP synthase or Complex V) produces ATP from ADP in the presence of a proton gradient across the membrane which is generated by electron transport complexes of the respiratory chain. F-type ATPases consist of two structural domains, F(1) - containing the extramembraneous catalytic core, and F(0) - containing the membrane proton channel, linked together by a central stalk and a peripheral stalk. During catalysis, ATP turnover in the catalytic domain of F(1) is coupled via a rotary mechanism of the central stalk subunits to proton translocation. Part of the complex F(1) domain and of the central stalk which is part of the complex rotary element. Rotation of the central stalk against the surrounding alpha(3)beta(3) subunits leads to hydrolysis of ATP in three separate catalytic sites on the beta subunits. This is ATP synthase subunit delta, mitochondrial (des) from Neurospora crassa (strain ATCC 24698 / 74-OR23-1A / CBS 708.71 / DSM 1257 / FGSC 987).